Reading from the N-terminus, the 283-residue chain is Protein FAM170B (283 aa).

The segment covering M1–E11 has biased composition (basic and acidic residues). Disordered stretches follow at residues M1 to G58 and A246 to Q283.

It belongs to the FAM170 family. In terms of assembly, interacts with GOPC. In terms of tissue distribution, exclusively expressed in adult testis.

Its subcellular location is the cytoplasmic vesicle. It localises to the secretory vesicle. It is found in the acrosome. The protein localises to the acrosome outer membrane. Functionally, plays a role in fertilization through the acrosome reaction. This Homo sapiens (Human) protein is Protein FAM170B.